A 104-amino-acid polypeptide reads, in one-letter code: Small ribosomal subunit protein bS16 (104 aa).

This sequence belongs to the bacterial ribosomal protein bS16 family.

The sequence is that of Small ribosomal subunit protein bS16 from Wolbachia pipientis subsp. Culex pipiens (strain wPip).